We begin with the raw amino-acid sequence, 217 residues long: Putative peroxiredoxin Q, chloroplastic (217 aa).

Residues 1 to 66 (MAFAVSTACR…PSTTGRNRIV (66 aa)) constitute a chloroplast transit peptide. The Thioredoxin domain maps to 70–217 (VSKGSAAPNF…GETLKILQSL (148 aa)). Cys-112 (cysteine sulfenic acid (-SOH) intermediate) is an active-site residue. Cys-112 and Cys-117 form a disulfide bridge.

This sequence belongs to the peroxiredoxin family. BCP/PrxQ subfamily. Monomer.

It is found in the plastid. Its subcellular location is the chloroplast thylakoid lumen. The enzyme catalyses a hydroperoxide + [thioredoxin]-dithiol = an alcohol + [thioredoxin]-disulfide + H2O. Functionally, thiol-specific peroxidase that catalyzes the reduction of hydrogen peroxide and organic hydroperoxides to water and alcohols, respectively. Plays a role in cell protection against oxidative stress by detoxifying peroxides. The chain is Putative peroxiredoxin Q, chloroplastic from Oryza sativa subsp. indica (Rice).